Consider the following 139-residue polypeptide: D-ribose pyranase (139 aa).

His-20 serves as the catalytic Proton donor. Substrate is bound by residues Asp-28, His-106, and 128–130; that span reads YAN.

This sequence belongs to the RbsD / FucU family. RbsD subfamily. Homodecamer.

The protein resides in the cytoplasm. It catalyses the reaction beta-D-ribopyranose = beta-D-ribofuranose. It participates in carbohydrate metabolism; D-ribose degradation; D-ribose 5-phosphate from beta-D-ribopyranose: step 1/2. In terms of biological role, catalyzes the interconversion of beta-pyran and beta-furan forms of D-ribose. The protein is D-ribose pyranase of Aliivibrio fischeri (strain MJ11) (Vibrio fischeri).